Consider the following 1270-residue polypeptide: DNA-directed RNA polymerase subunit beta (1270 aa).

This sequence belongs to the RNA polymerase beta chain family. In terms of assembly, the RNAP catalytic core consists of 2 alpha, 1 beta, 1 beta' and 1 omega subunit. When a sigma factor is associated with the core the holoenzyme is formed, which can initiate transcription.

The enzyme catalyses RNA(n) + a ribonucleoside 5'-triphosphate = RNA(n+1) + diphosphate. In terms of biological role, DNA-dependent RNA polymerase catalyzes the transcription of DNA into RNA using the four ribonucleoside triphosphates as substrates. The polypeptide is DNA-directed RNA polymerase subunit beta (Flavobacterium johnsoniae (strain ATCC 17061 / DSM 2064 / JCM 8514 / BCRC 14874 / CCUG 350202 / NBRC 14942 / NCIMB 11054 / UW101) (Cytophaga johnsonae)).